We begin with the raw amino-acid sequence, 279 residues long: ATP synthase gamma chain (279 aa).

This sequence belongs to the ATPase gamma chain family. As to quaternary structure, F-type ATPases have 2 components, CF(1) - the catalytic core - and CF(0) - the membrane proton channel. CF(1) has five subunits: alpha(3), beta(3), gamma(1), delta(1), epsilon(1). CF(0) has three main subunits: a, b and c.

It is found in the cell membrane. Produces ATP from ADP in the presence of a proton gradient across the membrane. The gamma chain is believed to be important in regulating ATPase activity and the flow of protons through the CF(0) complex. This chain is ATP synthase gamma chain, found in Mycoplasma pneumoniae (strain ATCC 29342 / M129 / Subtype 1) (Mycoplasmoides pneumoniae).